Consider the following 210-residue polypeptide: Protein GrpE (210 aa).

Residues 1 to 12 (MSDQAKDERAPS) are compositionally biased toward basic and acidic residues. Disordered stretches follow at residues 1 to 26 (MSDQ…RTEG) and 191 to 210 (IAAE…EKDA).

This sequence belongs to the GrpE family. As to quaternary structure, homodimer.

The protein localises to the cytoplasm. Functionally, participates actively in the response to hyperosmotic and heat shock by preventing the aggregation of stress-denatured proteins, in association with DnaK and GrpE. It is the nucleotide exchange factor for DnaK and may function as a thermosensor. Unfolded proteins bind initially to DnaJ; upon interaction with the DnaJ-bound protein, DnaK hydrolyzes its bound ATP, resulting in the formation of a stable complex. GrpE releases ADP from DnaK; ATP binding to DnaK triggers the release of the substrate protein, thus completing the reaction cycle. Several rounds of ATP-dependent interactions between DnaJ, DnaK and GrpE are required for fully efficient folding. In Mesorhizobium japonicum (strain LMG 29417 / CECT 9101 / MAFF 303099) (Mesorhizobium loti (strain MAFF 303099)), this protein is Protein GrpE.